A 187-amino-acid chain; its full sequence is dITP/XTP pyrophosphatase (187 aa).

7-12 is a binding site for substrate; it reads TGNKHK. Mg(2+) is bound by residues Glu-36 and Asp-64. Catalysis depends on Asp-64, which acts as the Proton acceptor. Substrate is bound by residues Ala-65, 140–143, Lys-163, and 168–169; these read FAFD and HR.

Belongs to the HAM1 NTPase family. Homodimer. Mg(2+) is required as a cofactor.

It catalyses the reaction XTP + H2O = XMP + diphosphate + H(+). The enzyme catalyses dITP + H2O = dIMP + diphosphate + H(+). The catalysed reaction is ITP + H2O = IMP + diphosphate + H(+). In terms of biological role, pyrophosphatase that catalyzes the hydrolysis of nucleoside triphosphates to their monophosphate derivatives, with a high preference for the non-canonical purine nucleotides XTP (xanthosine triphosphate), dITP (deoxyinosine triphosphate) and ITP. Seems to function as a house-cleaning enzyme that removes non-canonical purine nucleotides from the nucleotide pool, thus preventing their incorporation into DNA/RNA and avoiding chromosomal lesions. The chain is dITP/XTP pyrophosphatase from Methanothermobacter marburgensis (strain ATCC BAA-927 / DSM 2133 / JCM 14651 / NBRC 100331 / OCM 82 / Marburg) (Methanobacterium thermoautotrophicum).